The sequence spans 1597 residues: Protein STU1 (1597 aa).

Disordered regions lie at residues 220–265 (GNSS…PSSS), 519–958 (DKVN…RPIH), 1005–1154 (DAEA…ELNT), and 1307–1332 (SQRP…SSLV). A compositionally biased stretch (basic and acidic residues) spans 535–552 (APRESLKEVMRRSRESSV). The span at 577–605 (SSGLVGRSLSGSNLTDRSNRLSSTSTSSR) shows a compositional bias: low complexity. 2 stretches are compositionally biased toward polar residues: residues 610 to 622 (AVSD…QMTR) and 632 to 645 (PSLT…SLTR). Basic and acidic residues-rich tracts occupy residues 660–673 (GSRE…DQNR) and 694–708 (ESSR…DPSR). Positions 709-726 (ESSLAPSVHSSTAISRES) are enriched in polar residues. Residues 765-781 (EETMNEVTTAEATATTA) are compositionally biased toward low complexity. Polar residues-rich tracts occupy residues 791-801 (PRESTPPNSSP) and 808-822 (PATQ…TGKS). Residues 832–846 (ELSRDLNGESKHLKE) are compositionally biased toward basic and acidic residues. Polar residues-rich tracts occupy residues 918-933 (DSQS…QSEP), 1013-1025 (TEQT…SDTA), and 1036-1045 (NSEQGPSTEP). Residues 1081 to 1091 (ASDEIETDHTK) show a composition bias toward basic and acidic residues. Positions 1108 to 1119 (EPMEICDSDNDA) are enriched in acidic residues. Residues 1122–1139 (NGTNPDTKCQDQQDSTTP) are compositionally biased toward polar residues. The stretch at 1537 to 1573 (PSYETQLLALITELISDPDPLVRRVTVGLVVRVLRVS) is one HEAT repeat.

This sequence belongs to the CLASP family. In terms of assembly, interacts with microtubules.

Its subcellular location is the cytoplasm. The protein localises to the cytoskeleton. It localises to the nucleus. The protein resides in the spindle. Functionally, microtubule binding protein that promotes the stabilization of dynamic microtubules. Required for mitotic spindle formation. The protein is Protein STU1 (STU1) of Yarrowia lipolytica (strain CLIB 122 / E 150) (Yeast).